A 223-amino-acid chain; its full sequence is Neurotrophic factor BDNF precursor form (223 aa).

An N-terminal signal peptide occupies residues 1 to 5 (SCMKA). Positions 6–114 (APMKEVSIRG…AANMSMRVRR (109 aa)) are excised as a propeptide. Residue asparagine 107 is glycosylated (N-linked (GlcNAc...) asparagine). Cystine bridges form between cysteine 127–cysteine 194 and cysteine 172–cysteine 223.

Belongs to the NGF-beta family.

Its subcellular location is the secreted. In terms of biological role, promotes the survival of neuronal populations that are all located either in the central nervous system or directly connected to it. The sequence is that of Neurotrophic factor BDNF precursor form (BDNF) from Exiliboa placata (Oaxacan dwarf boa).